A 475-amino-acid polypeptide reads, in one-letter code: Ribulose bisphosphate carboxylase large chain (475 aa).

The propeptide occupies 1 to 2 (MS). Pro3 carries the post-translational modification N-acetylproline. Lys14 bears the N6,N6,N6-trimethyllysine mark. Substrate is bound by residues Asn123 and Thr173. Lys175 (proton acceptor) is an active-site residue. Substrate is bound at residue Lys177. Mg(2+) contacts are provided by Lys201, Asp203, and Glu204. N6-carboxylysine is present on Lys201. Residue His294 is the Proton acceptor of the active site. Substrate contacts are provided by Arg295, His327, and Ser379.

This sequence belongs to the RuBisCO large chain family. Type I subfamily. Heterohexadecamer of 8 large chains and 8 small chains; disulfide-linked. The disulfide link is formed within the large subunit homodimers. Requires Mg(2+) as cofactor. The disulfide bond which can form in the large chain dimeric partners within the hexadecamer appears to be associated with oxidative stress and protein turnover.

Its subcellular location is the plastid. It localises to the chloroplast. It carries out the reaction 2 (2R)-3-phosphoglycerate + 2 H(+) = D-ribulose 1,5-bisphosphate + CO2 + H2O. The catalysed reaction is D-ribulose 1,5-bisphosphate + O2 = 2-phosphoglycolate + (2R)-3-phosphoglycerate + 2 H(+). RuBisCO catalyzes two reactions: the carboxylation of D-ribulose 1,5-bisphosphate, the primary event in carbon dioxide fixation, as well as the oxidative fragmentation of the pentose substrate in the photorespiration process. Both reactions occur simultaneously and in competition at the same active site. The protein is Ribulose bisphosphate carboxylase large chain of Magnolia acuminata (Cucumber tree).